Consider the following 281-residue polypeptide: Aminoglycoside N(3)-acetyltransferase IX (281 aa).

It belongs to the antibiotic N-acetyltransferase family.

It carries out the reaction a 2-deoxystreptamine antibiotic + acetyl-CoA = an N(3)-acetyl-2-deoxystreptamine antibiotic + CoA + H(+). Its function is as follows. Resistance to neomycin. The chain is Aminoglycoside N(3)-acetyltransferase IX (aacC9) from Micromonospora chalcea.